The sequence spans 199 residues: dITP/XTP pyrophosphatase (199 aa).

A substrate-binding site is contributed by 7 to 12; sequence SANKGK. D38 and D73 together coordinate Mg(2+). The active-site Proton acceptor is the D73. Substrate-binding positions include S74, 155–158, K178, and 183–184; these read FGYD and HR.

It belongs to the HAM1 NTPase family. In terms of assembly, homodimer. It depends on Mg(2+) as a cofactor.

The enzyme catalyses XTP + H2O = XMP + diphosphate + H(+). The catalysed reaction is dITP + H2O = dIMP + diphosphate + H(+). It carries out the reaction ITP + H2O = IMP + diphosphate + H(+). Pyrophosphatase that catalyzes the hydrolysis of nucleoside triphosphates to their monophosphate derivatives, with a high preference for the non-canonical purine nucleotides XTP (xanthosine triphosphate), dITP (deoxyinosine triphosphate) and ITP. Seems to function as a house-cleaning enzyme that removes non-canonical purine nucleotides from the nucleotide pool, thus preventing their incorporation into DNA/RNA and avoiding chromosomal lesions. This is dITP/XTP pyrophosphatase from Aliarcobacter butzleri (strain RM4018) (Arcobacter butzleri).